Here is a 1116-residue protein sequence, read N- to C-terminus: Protein translocase subunit SecA (1116 aa).

Residues Gln-176, 194–198 (GEGKT), and Asp-693 contribute to the ATP site.

This sequence belongs to the SecA family. In terms of assembly, monomer and homodimer. Part of the essential Sec protein translocation apparatus which comprises SecA, SecYEG and auxiliary proteins SecDF. Other proteins may also be involved.

The protein localises to the cell inner membrane. It is found in the cytoplasm. It catalyses the reaction ATP + H2O + cellular proteinSide 1 = ADP + phosphate + cellular proteinSide 2.. Part of the Sec protein translocase complex. Interacts with the SecYEG preprotein conducting channel. Has a central role in coupling the hydrolysis of ATP to the transfer of proteins into and across the cell membrane, serving as an ATP-driven molecular motor driving the stepwise translocation of polypeptide chains across the membrane. This is Protein translocase subunit SecA from Amoebophilus asiaticus (strain 5a2).